The following is an 837-amino-acid chain: Striatin-interacting protein 1 (837 aa).

An N-acetylmethionine modification is found at Met1. Disordered stretches follow at residues 1 to 67 (MEPA…ESPD) and 333 to 423 (AASP…KGLP). Residues 18 to 35 (PQPPPPPPPATAQPPPGA) show a composition bias toward pro residues. The segment covering 36 to 46 (PRAAAGLLPGG) has biased composition (low complexity). Basic and acidic residues predominate over residues 47 to 60 (KAREFNRNQRKDSE). Phosphoserine is present on residues Ser59, Ser335, and Ser339. Residues 333–343 (AASPPASASDS) are compositionally biased toward low complexity. The span at 356-377 (KALIKQDNLDAFNERDPYKADD) shows a compositional bias: basic and acidic residues. Residues 378-391 (SREEEEENDDDNSL) show a composition bias toward acidic residues. Residue Ser788 is modified to Phosphoserine. The tract at residues 796–837 (DNCLQSVLGQRVDLPEDFQMNYDLWLEREVFSKPISWEELLQ) is required for STRIPAK core complex formation.

It belongs to the STRIP family. Part of the core of STRIPAK complexes composed of PP2A catalytic and scaffolding subunits, the striatins (PP2A regulatory subunits), the striatin-associated proteins MOB4, STRIP1 and STRIP2, PDCD10 and members of the STE20 kinases, such as STK24 and STK26. The STRIPAK complex can be extended by adapter proteins such as SLMAP:SIKE1, CTTNBP2 or CTTNBP2NL. Interacts with CDC42BPB. Interacts with CTTNBP2NL.

It is found in the cytoplasm. Plays a role in the regulation of cell morphology and cytoskeletal organization. Required in the cortical actin filament dynamics and cell shape. Part of the striatin-interacting phosphatase and kinase (STRIPAK) complexes. STRIPAK complexes have critical roles in protein (de)phosphorylation and are regulators of multiple signaling pathways including Hippo, MAPK, nuclear receptor and cytoskeleton remodeling. Different types of STRIPAK complexes are involved in a variety of biological processes such as cell growth, differentiation, apoptosis, metabolism and immune regulation. The sequence is that of Striatin-interacting protein 1 (STRIP1) from Pongo abelii (Sumatran orangutan).